A 343-amino-acid polypeptide reads, in one-letter code: Mas-related G-protein coupled receptor member F (343 aa).

Topologically, residues 1 to 44 (MAGNCSWEAHPGNRNKMCPGLSEAPELYSRGFLTIEQIAMLPPP) are extracellular. A glycan (N-linked (GlcNAc...) asparagine) is linked at Asn-4. Residues 45 to 66 (AVMNYIFLLLCLCGLVGNGLVL) traverse the membrane as a helical segment. Residues 67-82 (WFFGFSIKRNPFSIYF) are Cytoplasmic-facing. A helical membrane pass occupies residues 83 to 104 (LHLASADVGYLFSKAVFSILNT). Over 105–123 (GGFLGTFADYIRSVCRVLG) the chain is Extracellular. A helical membrane pass occupies residues 124–144 (LCMFLTGVSLLPAVSAERCAS). At 145 to 160 (VIFPAWYWRRRPKRLS) the chain is on the cytoplasmic side. Residues 161–181 (AVVCALLWVLSLLVTCLHNYF) traverse the membrane as a helical segment. Residues 182–198 (CVFLGRGAPGAACRHMD) lie on the Extracellular side of the membrane. The chain crosses the membrane as a helical span at residues 199–220 (IFLGILLFLLCCPLMVLPCLAL). The Cytoplasmic portion of the chain corresponds to 221-241 (ILHVECRARRRQRSAKLNHVI). The helical transmembrane segment at 242 to 263 (LAMVSVFLVSSIYLGIDWFLFW) threads the bilayer. The Extracellular portion of the chain corresponds to 264–273 (VFQIPAPFPE). A helical transmembrane segment spans residues 274–294 (YVTDLCICINSSAKPIVYFLA). The Cytoplasmic portion of the chain corresponds to 295–343 (GRDKSQRLWEPLRVVFQRALRDGAELGEAGGSTPNTVTMEMQCPPGNAS). Residues 320 to 343 (LGEAGGSTPNTVTMEMQCPPGNAS) form a disordered region.

Belongs to the G-protein coupled receptor 1 family. Mas subfamily.

Its subcellular location is the cell membrane. In terms of biological role, orphan receptor. May bind to a neuropeptide and may regulate nociceptor function and/or development, including the sensation or modulation of pain. The sequence is that of Mas-related G-protein coupled receptor member F (MRGPRF) from Homo sapiens (Human).